We begin with the raw amino-acid sequence, 203 residues long: Orotate phosphoribosyltransferase (203 aa).

5-phospho-alpha-D-ribose 1-diphosphate contacts are provided by residues Arg-94, Lys-98, His-100, and 120–128; that span reads EDLISTGGS. Residue Ser-124 participates in orotate binding.

This sequence belongs to the purine/pyrimidine phosphoribosyltransferase family. PyrE subfamily. As to quaternary structure, homodimer. It depends on Mg(2+) as a cofactor.

It carries out the reaction orotidine 5'-phosphate + diphosphate = orotate + 5-phospho-alpha-D-ribose 1-diphosphate. The protein operates within pyrimidine metabolism; UMP biosynthesis via de novo pathway; UMP from orotate: step 1/2. Catalyzes the transfer of a ribosyl phosphate group from 5-phosphoribose 1-diphosphate to orotate, leading to the formation of orotidine monophosphate (OMP). The chain is Orotate phosphoribosyltransferase from Staphylococcus saprophyticus subsp. saprophyticus (strain ATCC 15305 / DSM 20229 / NCIMB 8711 / NCTC 7292 / S-41).